The sequence spans 212 residues: Glycerol-3-phosphate acyltransferase (212 aa).

5 helical membrane passes run 3 to 23, 51 to 71, 78 to 98, 115 to 135, and 139 to 159; these read ILLAALVAYLIGSVSFAVIVS, KAAILTLVGDAFKGWLAVWLA, DVAVAWVAIAVFVGHLYPVFF, AVHPVLGLATALTWLIVAFFF, and SLAALVAAVFAPVFDVFLFGT.

Belongs to the PlsY family. In terms of assembly, probably interacts with PlsX.

The protein resides in the cell inner membrane. The enzyme catalyses an acyl phosphate + sn-glycerol 3-phosphate = a 1-acyl-sn-glycero-3-phosphate + phosphate. The protein operates within lipid metabolism; phospholipid metabolism. Its function is as follows. Catalyzes the transfer of an acyl group from acyl-phosphate (acyl-PO(4)) to glycerol-3-phosphate (G3P) to form lysophosphatidic acid (LPA). This enzyme utilizes acyl-phosphate as fatty acyl donor, but not acyl-CoA or acyl-ACP. The sequence is that of Glycerol-3-phosphate acyltransferase from Burkholderia vietnamiensis (strain G4 / LMG 22486) (Burkholderia cepacia (strain R1808)).